A 289-amino-acid polypeptide reads, in one-letter code: Cytochrome bc1 complex cytochrome c subunit (289 aa).

A compositionally biased stretch (basic residues) spans 1–11 (MKKLGFTRSSR). The tract at residues 1–28 (MKKLGFTRSSRRCSQPQEREQESERSRR) is disordered. Residues 37–55 (GLLLLVALTVSGGLAAVLT) form a helical membrane-spanning segment. Cytochrome c domains follow at residues 69–149 (ALLR…QANG) and 170–248 (TDLG…RTVI). Heme c contacts are provided by Cys82, Cys85, His86, Cys183, Cys186, and His187. Residues 267–287 (GMAIWIIGMVTAIGLALWIGA) traverse the membrane as a helical segment.

In terms of assembly, the cytochrome bc1 complex is composed of a cytochrome b (QcrB), the Rieske iron-sulfur protein (QcrA) and a diheme cytochrome c (QcrC) subunit. Binds 2 heme c groups covalently per subunit.

It is found in the cell membrane. The catalysed reaction is a quinol + 2 Fe(III)-[cytochrome c](out) = a quinone + 2 Fe(II)-[cytochrome c](out) + 2 H(+)(out). Functionally, cytochrome b subunit of the cytochrome bc1 complex, an essential component of the respiratory electron transport chain required for ATP synthesis. The bc1 complex catalyzes the oxidation of ubiquinol and the reduction of cytochrome c in the respiratory chain. The bc1 complex operates through a Q-cycle mechanism that couples electron transfer to generation of the proton gradient that drives ATP synthesis. The chain is Cytochrome bc1 complex cytochrome c subunit (qcrC) from Mycobacterium leprae (strain TN).